Here is a 388-residue protein sequence, read N- to C-terminus: MAKGKKLSFSFHTYQDSVTGTEVVRLTPPDVICHRNYFYQKCFSNDGSKLLFGGAFDGPWNYYLLDLKTQQATQLTEGTGDNTFGGFLSPDDDALYYVKNVRNLMRVDLNTLEETNIYQVPDDWVGYGTWVANSDCTKMVGIEIKKEDWKPLTDWKKFQEFYFTNPCCRLIRIDLKTGEATTILKENQWLGHPIYRPGDDNTVAFCHEGPHDLVDARMWFINEDGSNMRKVKEHAPGESCTHEFWVPNGSALAYVSYLKGSTNRFICSVDPVTLENRQLTEMPPCSHLMSNYDGTLMVGDGCNAPVDVKDDGGYKIENDPFLYVFNMKTGKHFQVAQHNTSWEVLEGDRQVTHPHPSFTPDDKHILFTSDVDGKPALYLAKVPDSVWQ.

The protein resides in the periplasm. It carries out the reaction 4-(4-deoxy-alpha-D-galact-4-enuronosyl)-D-galacturonate = 2 5-dehydro-4-deoxy-D-glucuronate. Its pathway is glycan metabolism; pectin degradation; 2-dehydro-3-deoxy-D-gluconate from pectin: step 3/5. Functionally, involved in degradation of pectin, which causes soft-rod disease in plants. This chain is Oligogalacturonate lyase (ogl), found in Dickeya dadantii (strain 3937) (Erwinia chrysanthemi (strain 3937)).